Consider the following 173-residue polypeptide: Acireductone dioxygenase (173 aa).

The interval 1-21 (MKFYYHDNDSSVDQCAPHDSG) is disordered. Fe(2+) is bound by residues histidine 84, histidine 86, glutamate 90, and histidine 129. Positions 84, 86, 90, and 129 each coordinate Ni(2+).

This sequence belongs to the acireductone dioxygenase (ARD) family. The cofactor is Fe(2+). Ni(2+) is required as a cofactor.

The protein resides in the cytoplasm. The protein localises to the nucleus. It carries out the reaction 1,2-dihydroxy-5-(methylsulfanyl)pent-1-en-3-one + O2 = 4-methylsulfanyl-2-oxobutanoate + formate + 2 H(+). It catalyses the reaction 1,2-dihydroxy-5-(methylsulfanyl)pent-1-en-3-one + O2 = 3-(methylsulfanyl)propanoate + CO + formate + 2 H(+). It participates in amino-acid biosynthesis; L-methionine biosynthesis via salvage pathway; L-methionine from S-methyl-5-thio-alpha-D-ribose 1-phosphate: step 5/6. Its function is as follows. Catalyzes 2 different reactions between oxygen and the acireductone 1,2-dihydroxy-3-keto-5-methylthiopentene (DHK-MTPene) depending upon the metal bound in the active site. Fe-containing acireductone dioxygenase (Fe-ARD) produces formate and 2-keto-4-methylthiobutyrate (KMTB), the alpha-ketoacid precursor of methionine in the methionine recycle pathway. Ni-containing acireductone dioxygenase (Ni-ARD) produces methylthiopropionate, carbon monoxide and formate, and does not lie on the methionine recycle pathway. This is Acireductone dioxygenase from Yarrowia lipolytica (strain CLIB 122 / E 150) (Yeast).